Consider the following 256-residue polypeptide: Thiazole synthase (256 aa).

The Schiff-base intermediate with DXP role is filled by Lys95. 1-deoxy-D-xylulose 5-phosphate contacts are provided by residues Gly156, 182–183, and 204–205; these read AG and NT.

Belongs to the ThiG family. Homotetramer. Forms heterodimers with either ThiH or ThiS.

The protein localises to the cytoplasm. It carries out the reaction [ThiS sulfur-carrier protein]-C-terminal-Gly-aminoethanethioate + 2-iminoacetate + 1-deoxy-D-xylulose 5-phosphate = [ThiS sulfur-carrier protein]-C-terminal Gly-Gly + 2-[(2R,5Z)-2-carboxy-4-methylthiazol-5(2H)-ylidene]ethyl phosphate + 2 H2O + H(+). It functions in the pathway cofactor biosynthesis; thiamine diphosphate biosynthesis. Catalyzes the rearrangement of 1-deoxy-D-xylulose 5-phosphate (DXP) to produce the thiazole phosphate moiety of thiamine. Sulfur is provided by the thiocarboxylate moiety of the carrier protein ThiS. In vitro, sulfur can be provided by H(2)S. This Shigella flexneri protein is Thiazole synthase.